Consider the following 122-residue polypeptide: Hydrogenase maturation factor HypA (122 aa).

Histidine 2 contacts Ni(2+). Positions 73, 75, 95, and 98 each coordinate Zn(2+).

This sequence belongs to the HypA/HybF family.

Involved in the maturation of [NiFe] hydrogenases. Required for nickel insertion into the metal center of the hydrogenase. This chain is Hydrogenase maturation factor HypA, found in Methanothermobacter thermautotrophicus (strain ATCC 29096 / DSM 1053 / JCM 10044 / NBRC 100330 / Delta H) (Methanobacterium thermoautotrophicum).